A 179-amino-acid chain; its full sequence is ATP synthase subunit delta (179 aa).

The protein belongs to the ATPase delta chain family. In terms of assembly, F-type ATPases have 2 components, F(1) - the catalytic core - and F(0) - the membrane proton channel. F(1) has five subunits: alpha(3), beta(3), gamma(1), delta(1), epsilon(1). F(0) has three main subunits: a(1), b(2) and c(10-14). The alpha and beta chains form an alternating ring which encloses part of the gamma chain. F(1) is attached to F(0) by a central stalk formed by the gamma and epsilon chains, while a peripheral stalk is formed by the delta and b chains.

It localises to the cell membrane. F(1)F(0) ATP synthase produces ATP from ADP in the presence of a proton or sodium gradient. F-type ATPases consist of two structural domains, F(1) containing the extramembraneous catalytic core and F(0) containing the membrane proton channel, linked together by a central stalk and a peripheral stalk. During catalysis, ATP synthesis in the catalytic domain of F(1) is coupled via a rotary mechanism of the central stalk subunits to proton translocation. In terms of biological role, this protein is part of the stalk that links CF(0) to CF(1). It either transmits conformational changes from CF(0) to CF(1) or is implicated in proton conduction. The polypeptide is ATP synthase subunit delta (Staphylococcus haemolyticus (strain JCSC1435)).